The sequence spans 243 residues: MSGHSKWSTIKRKKGALDAKRNKIFTKLIREISIAAKMGGGDIDSNPRLRLAINKARVSNMPKDNIEKAIKKGIGDNTGAEYFELTYEAYALHGVALIIKCLTDNKNRTASEVRSVLSKNGASLGAPGSVSYMFHKKGLISYSLDKYPEDEIMELALEAGAEDIYSEGSQIEVITSAETFEAISSVLRTKFEEDIAEIALLPENKISLNKEQIDKVLSLIEKLEDFDDVQEVVHNLEIIDEID.

This sequence belongs to the TACO1 family.

The protein resides in the cytoplasm. The polypeptide is Probable transcriptional regulatory protein BH0025 (Borrelia hermsii (strain HS1 / DAH)).